The following is a 209-amino-acid chain: Kinetochore protein Spc25 (209 aa).

Positions 74–107 (TRAVREKLAEERQKNAEMQAQLEKANDERIEQMD) form a coiled coil.

It belongs to the SPC25 family. As to quaternary structure, component of the Ndc80 complex, which is composed of Ndc80, Nuf2 and Spc25.

It localises to the nucleus. The protein localises to the chromosome. Its subcellular location is the centromere. The protein resides in the kinetochore. Acts as a component of the essential kinetochore-associated Ndc80 complex, which is required for chromosome segregation and spindle checkpoint activity during meiosis and mitosis. Required for kinetochore integrity and the organization of stable microtubule binding sites in the outer plate of the kinetochore. Participates in SAC signaling that responds specifically to disruptions in spindle microtubule dynamics. The NDC80 complex synergistically enhances the affinity of the SKA1 complex for microtubules and may allow the NDC80 complex to track depolymerizing microtubules. The polypeptide is Kinetochore protein Spc25 (Drosophila grimshawi (Hawaiian fruit fly)).